A 3550-amino-acid chain; its full sequence is Zinc finger homeobox protein 4 (3550 aa).

An N-acetylmethionine modification is found at Met1. Disordered stretches follow at residues 1–54, 426–479, and 521–614; these read METC…LKTD, HLSS…AYSN, and TSSS…IECP. Over residues 9–20 the composition is skewed to polar residues; sequence ISRQENGQSTSK. Composition is skewed to basic and acidic residues over residues 39 to 54 and 433 to 451; these read EPDR…LKTD and KMSE…KEST. Over residues 467–479 the composition is skewed to acidic residues; sequence EPGDEDEEDAYSN. 2 stretches are compositionally biased toward polar residues: residues 542–553 and 566–576; these read GRSNGNVTNSYS and RDGTTAAPSET. 3 C2H2-type zinc fingers span residues 611–634, 642–665, and 697–721; these read IECP…TMMH, LKCP…KEKH, and FRCE…SDKH. Residues 739–763 form a disordered region; the sequence is HSAPTPNTSLSGCGTPSPSKPKQKP. Residues 742–752 are compositionally biased toward polar residues; it reads PTPNTSLSGCG. C2H2-type zinc fingers lie at residues 765–787, 915–939, 971–993, and 1019–1043; these read RRCE…MTSE, YQCK…TDKH, LKCN…TTNH, and YYCA…SVKH. The disordered stretch occupies residues 1100 to 1142; it reads KAASEEPSEDAGDPLKPPTVAEDDEKEAHKRDNSEGKISTKDP. Positions 1125-1142 are enriched in basic and acidic residues; sequence KEAHKRDNSEGKISTKDP. A Glycyl lysine isopeptide (Lys-Gly) (interchain with G-Cter in SUMO2) cross-link involves residue Lys1165. C2H2-type zinc fingers lie at residues 1188–1211 and 1217–1240; these read YQYP…LSQH and ICCP…THLH. The interval 1271–1339 is disordered; the sequence is APEKSEQDPP…EWNKTSSKDV (69 aa). Over residues 1297–1326 the composition is skewed to basic and acidic residues; it reads VDDKSMSGLEDSKVGVEIKNEEQKPAKEPV. Lys1315 participates in a covalent cross-link: Glycyl lysine isopeptide (Lys-Gly) (interchain with G-Cter in SUMO2). C2H2-type zinc fingers lie at residues 1368-1390 and 1396-1419; these read YRCN…SQYH and TMCT…EAGH. A disordered region spans residues 1467-1492; it reads EGKASPVESDGSSIPDDLGLEPKRTL. The segment at 1512 to 1538 adopts a C2H2-type 12 zinc-finger fold; the sequence is YKCTVCKESFTQKNILLVHYNSVSHLH. Lys1562 is covalently cross-linked (Glycyl lysine isopeptide (Lys-Gly) (interchain with G-Cter in SUMO2)). The C2H2-type 13 zinc-finger motif lies at 1564–1588; that stretch reads YKCSTCSVAYSQSSTLEIHMRSVLH. Residues 1779–1873 are disordered; it reads PQLQPQNQQP…CIPPPRIASG (95 aa). Positions 1792–1808 are enriched in low complexity; sequence QQQQPQQQPSKLLKQEQ. Lys1805 participates in a covalent cross-link: Glycyl lysine isopeptide (Lys-Gly) (interchain with G-Cter in SUMO2). A compositionally biased stretch (basic and acidic residues) spans 1823-1860; that stretch reads PSYKEAEEVTEKQEKPKQEFINDTEGLKDSKDIKKQKS. The segment at 1916–1939 adopts a C2H2-type 14 zinc-finger fold; the sequence is LECGICGKLFSNVLILKSHQEHVH. Positions 1984 to 2006 are disordered; it reads KIPNTVSAPLQAPPPTPPSAPQQ. Over residues 1994–2003 the composition is skewed to pro residues; sequence QAPPPTPPSA. 2 consecutive DNA-binding regions (homeobox) follow at residues 2069–2128 and 2166–2225; these read FKRP…RQRN and KRSS…RKSY. The segment at 2252 to 2276 adopts a C2H2-type 15; degenerate zinc-finger fold; sequence YQCKKCNVVFPRIFDLITHQKKQCY. Polar residues predominate over residues 2318–2331; sequence TLVASSGSGTSTPL. Residues 2318–2412 are disordered; it reads TLVASSGSGT…SQTPIPSSPL (95 aa). Basic and acidic residues predominate over residues 2337–2355; the sequence is PEPEKNSPKTEYPGEKTKQ. Residues 2356–2376 are compositionally biased toward polar residues; it reads SDPSLPQGTKSAPSSVLTSSE. Positions 2383 to 2392 are enriched in pro residues; the sequence is PQPPTQPPKQ. Polar residues predominate over residues 2401-2412; it reads SASQTPIPSSPL. The C2H2-type 16 zinc finger occupies 2430–2452; the sequence is YPCDQCTLAFPTLELWKEHQHMH. Over residues 2490 to 2508 the composition is skewed to polar residues; the sequence is GSSLTQMPPQTSTAHTTAP. Residues 2490-2545 form a disordered region; the sequence is GSSLTQMPPQTSTAHTTAPASVAASLKRKLEDKEDNNCSEKEGGNSGEDQHRDKRL. The segment covering 2517 to 2541 has biased composition (basic and acidic residues); that stretch reads RKLEDKEDNNCSEKEGGNSGEDQHR. Positions 2542-2601 form a DNA-binding region, homeobox 3; sequence DKRLRTTITPEQLEILYEKYLLDSNPTRKMLDHIAREVGLKKRVVQVWFQNTRARERKGQ. The C2H2-type 17 zinc finger occupies 2612-2635; that stretch reads KRCPFCRALFKAKSALESHIRSRH. Residue Ser2645 is modified to Phosphoserine. Disordered stretches follow at residues 2746 to 2791 and 2810 to 2866; these read AISD…ATTP and HFND…PGHK. Residues 2781–2791 are compositionally biased toward polar residues; that stretch reads LDSLQKPATTP. Residues 2811-2820 show a composition bias toward basic and acidic residues; it reads FNDKDGDHDQ. Residues 2843–2855 show a composition bias toward low complexity; it reads PSSPNPFGSSNPF. Positions 2865–2924 form a DNA-binding region, homeobox 4; it reads HKRFRTQMSNLQLKVLKACFSDYRTPTMQECEMLGNEIGLPKRVVQVWFQNARAKERKFK. Residues 2943 to 2967 form a C2H2-type 18 zinc finger; that stretch reads PECTLCGVKYSARLSIRDHIFSKQH. Disordered regions lie at residues 3051 to 3156 and 3261 to 3318; these read PSSL…EEKI and QDSL…VQLD. The span at 3058 to 3068 shows a compositional bias: polar residues; sequence PQNSNTLTSPG. Low complexity predominate over residues 3075–3088; the sequence is PSSATSSPALSLSS. Residues 3097–3109 are compositionally biased toward pro residues; sequence TPPPPPPPPPPPS. The span at 3136-3156 shows a compositional bias: basic and acidic residues; it reads IKEEESEAIKPEKHPKKEEKI. Lys3137 participates in a covalent cross-link: Glycyl lysine isopeptide (Lys-Gly) (interchain with G-Cter in SUMO2). The stretch at 3248-3277 forms a coiled coil; the sequence is ALLQQYQQYQQSLQDSLQKQQKQQQEQQQK. The span at 3261-3276 shows a compositional bias: low complexity; that stretch reads QDSLQKQQKQQQEQQQ. A compositionally biased stretch (basic and acidic residues) spans 3298-3318; it reads SETKEEKSTAPESTKEEVQLD. The C2H2-type 19; degenerate zinc-finger motif lies at 3337–3361; that stretch reads FVCRKCQMMFTDEDATVNHQKSFCY. A C2H2-type 20 zinc finger spans residues 3381-3405; sequence YQCLACDLALSGNEALSQHLQSSLH. The segment at 3424-3445 is disordered; that stretch reads LPHSVCSPPPNTSSTSPSAASS. Residues 3435–3445 are compositionally biased toward low complexity; it reads TSSTSPSAASS.

This sequence belongs to the krueppel C2H2-type zinc-finger protein family. In terms of tissue distribution, expressed in brain, heart, lung, muscle and small intestine. No expression detected in undifferentiated P19 cells, however, expression was seen following retinoic acid treatment to induce neuronal differentiation. Expressed in undifferentiated C2C12 cells, following induction of muscle differentiation in a low-serum medium, expression levels were decreased.

The protein resides in the nucleus. Functionally, may play a role in neural and muscle differentiation. May be involved in transcriptional regulation. The sequence is that of Zinc finger homeobox protein 4 (Zfhx4) from Mus musculus (Mouse).